A 1038-amino-acid chain; its full sequence is Probable ubiquitin conjugation factor E4 (1038 aa).

2 disordered regions span residues 430–459 (ANDA…ASGQ) and 1010–1038 (SHQS…MLID). The segment covering 446-459 (SKEATSSSSNASGQ) has biased composition (low complexity). The 75-residue stretch at 940–1014 (EIPDEFLDPI…DEFVKSHQSK (75 aa)) folds into the U-box domain. Basic and acidic residues predominate over residues 1017-1028 (TSGEDSSNKERI). Residues 1029–1038 (QTTNSDMLID) are compositionally biased toward polar residues.

The protein belongs to the ubiquitin conjugation factor E4 family.

The protein resides in the cytoplasm. It localises to the nucleus. The catalysed reaction is S-ubiquitinyl-[E2 ubiquitin-conjugating enzyme]-L-cysteine + [acceptor protein]-L-lysine = [E2 ubiquitin-conjugating enzyme]-L-cysteine + N(6)-ubiquitinyl-[acceptor protein]-L-lysine.. It participates in protein modification; protein ubiquitination. Ubiquitin-protein ligase that may function as an E3 ligase in conjunction with specific E1 and E2 ligases. May also function as an E4 ligase mediating the assembly of polyubiquitin chain assembly on substrates monoubiquitinated by another E3 ubiquitin ligase. The protein is Probable ubiquitin conjugation factor E4 (PUB1) of Arabidopsis thaliana (Mouse-ear cress).